Reading from the N-terminus, the 296-residue chain is Formamidopyrimidine-DNA glycosylase (296 aa).

Catalysis depends on Pro2, which acts as the Schiff-base intermediate with DNA. Catalysis depends on Glu3, which acts as the Proton donor. The active-site Proton donor; for beta-elimination activity is the Lys58. DNA is bound by residues His104, Arg126, and Lys169. The FPG-type zinc finger occupies 260-296 (SVYDRAGEACRKPGCDGTVTRIVQAGRSTFHCPRCQK). The active-site Proton donor; for delta-elimination activity is Arg286.

This sequence belongs to the FPG family. In terms of assembly, monomer. Zn(2+) is required as a cofactor.

It catalyses the reaction Hydrolysis of DNA containing ring-opened 7-methylguanine residues, releasing 2,6-diamino-4-hydroxy-5-(N-methyl)formamidopyrimidine.. It carries out the reaction 2'-deoxyribonucleotide-(2'-deoxyribose 5'-phosphate)-2'-deoxyribonucleotide-DNA = a 3'-end 2'-deoxyribonucleotide-(2,3-dehydro-2,3-deoxyribose 5'-phosphate)-DNA + a 5'-end 5'-phospho-2'-deoxyribonucleoside-DNA + H(+). In terms of biological role, involved in base excision repair of DNA damaged by oxidation or by mutagenic agents. Acts as a DNA glycosylase that recognizes and removes damaged bases. Has a preference for oxidized purines, such as 7,8-dihydro-8-oxoguanine (8-oxoG). Has AP (apurinic/apyrimidinic) lyase activity and introduces nicks in the DNA strand. Cleaves the DNA backbone by beta-delta elimination to generate a single-strand break at the site of the removed base with both 3'- and 5'-phosphates. This Sinorhizobium fredii (strain NBRC 101917 / NGR234) protein is Formamidopyrimidine-DNA glycosylase.